We begin with the raw amino-acid sequence, 243 residues long: Urease accessory protein UreF 2 (243 aa).

Belongs to the UreF family. As to quaternary structure, ureD, UreF and UreG form a complex that acts as a GTP-hydrolysis-dependent molecular chaperone, activating the urease apoprotein by helping to assemble the nickel containing metallocenter of UreC. The UreE protein probably delivers the nickel.

It is found in the cytoplasm. Required for maturation of urease via the functional incorporation of the urease nickel metallocenter. In terms of biological role, disrupting the ure2 operon has no effect on urease activity or pathogen survival in BALB/c mice when administered orally. The protein is Urease accessory protein UreF 2 of Brucella abortus (strain 2308).